The primary structure comprises 284 residues: NAD kinase (284 aa).

Asp-60 (proton acceptor) is an active-site residue. NAD(+) is bound by residues 60–61 (DG), 134–135 (ND), Lys-145, Arg-162, Asp-164, and Gln-235.

Belongs to the NAD kinase family. A divalent metal cation is required as a cofactor.

It localises to the cytoplasm. It carries out the reaction NAD(+) + ATP = ADP + NADP(+) + H(+). Functionally, involved in the regulation of the intracellular balance of NAD and NADP, and is a key enzyme in the biosynthesis of NADP. Catalyzes specifically the phosphorylation on 2'-hydroxyl of the adenosine moiety of NAD to yield NADP. This is NAD kinase from Treponema denticola (strain ATCC 35405 / DSM 14222 / CIP 103919 / JCM 8153 / KCTC 15104).